Consider the following 490-residue polypeptide: Tektin-3 (490 aa).

Thr-7, Thr-9, and Thr-11 each carry an O-linked (GalNAc...) threonine glycan. N-linked (GlcNAc...) asparagine glycans are attached at residues Asn-41, Asn-86, Asn-111, and Asn-276. Positions 415 to 461 form a coiled coil; it reads MAQLRLVNEVYEVDETIQTLQQRLRDSEDTLQSLAHTKATLEHDLAV.

The protein belongs to the tektin family. In terms of assembly, microtubule inner protein component of sperm flagellar doublet microtubules. Interacts with TEKT1, TEKT2, TEKT4 and TEKT5. Interacts with CCDC38. Post-translationally, N- and O-glycosylated. Ubiquitinated, leading to its degradation. Deubiquitinated by USP16, promoting its stability. In terms of processing, may be proteolytically processed during the epididymal transit of spermatozoa. In terms of tissue distribution, expressed preferentially in testis. Expressed predominantly in late pachytene spermatocytes and early round spermatids. Expressed in spermatozoa.

It localises to the cytoplasm. The protein localises to the cytoskeleton. It is found in the cilium axoneme. Its subcellular location is the flagellum axoneme. The protein resides in the cytoplasmic vesicle. It localises to the secretory vesicle. The protein localises to the acrosome outer membrane. Microtubule inner protein (MIP) part of the dynein-decorated doublet microtubules (DMTs) in cilia and flagellar axoneme. Forms filamentous polymers in the walls of ciliary and flagellar microtubules. Required for normal sperm mobility. The polypeptide is Tektin-3 (Tekt3) (Mus musculus (Mouse)).